A 481-amino-acid polypeptide reads, in one-letter code: PRAME family member 22 (481 aa).

The stretch at 99–126 (RWKLQVLELRDVDENFWTIWSGARPLSC) is one LRR 1; degenerate repeat. One copy of the LRR 2; degenerate repeat lies at 181–205 (HLCCTKVVNYSMSILNFRNILETVY). Residues 206-232 (PDSIQVLEIWNMCWPCMIVEFSRYLSQ) form an LRR 3; degenerate repeat. An LRR 4; degenerate repeat occupies 233 to 267 (MRNLRKLFISDGCRYLLSSDSQEQLVAEFSSVLLR). LRR repeat units follow at residues 268–293 (LEYLQMLYVRRVCFFRGHLDQLIRCL), 294–325 (RSPLETLALTYGFLEKVDLKCLPRYPSLSQLK), 326–344 (QLNLSHGALRFIRLEPLRA), 350–377 (AATLQTLFLVDCGIRDSKLRVILPALSC), and 378–402 (CSNLTTFCFHGNDTSMDGLKDLLRH).

It belongs to the PRAME family.

In Homo sapiens (Human), this protein is PRAME family member 22.